Consider the following 267-residue polypeptide: 2-keto-3-deoxy-L-rhamnonate aldolase (267 aa).

H49 acts as the Proton acceptor in catalysis. Q151 contacts substrate. Residue E153 participates in Mg(2+) binding. Substrate-binding residues include A178 and D179. D179 lines the Mg(2+) pocket.

The protein belongs to the HpcH/HpaI aldolase family. KDR aldolase subfamily. Homohexamer. Mg(2+) serves as cofactor.

It carries out the reaction 2-dehydro-3-deoxy-L-rhamnonate = (S)-lactaldehyde + pyruvate. Its function is as follows. Catalyzes the reversible retro-aldol cleavage of 2-keto-3-deoxy-L-rhamnonate (KDR) to pyruvate and lactaldehyde. The protein is 2-keto-3-deoxy-L-rhamnonate aldolase of Salmonella gallinarum (strain 287/91 / NCTC 13346).